The chain runs to 775 residues: Probable ubiquitin carboxyl-terminal hydrolase creB (775 aa).

The disordered stretch occupies residues 1-45 (MGSFLRSFRHNGGSTAPSVGAVPAKKEPQPPPMTPLEKRLLDMGP). The span at 36-45 (LEKRLLDMGP) shows a compositional bias: basic and acidic residues. The region spanning 55 to 468 (YGMENYGNTC…CAYVLFYQET (414 aa)) is the USP domain. C64 acts as the Nucleophile in catalysis. Disordered regions lie at residues 113 to 146 (EAEAQAEKQKAANAQRPGMPPNPQQKPEDKDSPE) and 238 to 269 (ASKQPPIEKSLPAPETADSVDQSSSTGSKTPN). Residues 256-269 (SVDQSSSTGSKTPN) show a composition bias toward polar residues. H419 (proton acceptor) is an active-site residue. The interval 496–775 (LKQNGFPQSP…LRKKSFSILS (280 aa)) is disordered. Composition is skewed to low complexity over residues 546–566 (ESAPFSPLSPLSPLSPLSPLS) and 576–585 (ERVTTVATPP). Positions 586–653 (KNDALAKKER…ASKAEEDRRL (68 aa)) form a coiled coil. Residues 589 to 662 (ALAKKERARE…LSHENGKEKQ (74 aa)) are compositionally biased toward basic and acidic residues. Residues 668–679 (RLKRGSKSLSHR) show a composition bias toward basic residues. The segment covering 705–725 (SQTGPTSEQQQQQQQQQSPPN) has biased composition (low complexity). Over residues 739–757 (TIREDEQVNHKDSKHERTG) the composition is skewed to basic and acidic residues. Over residues 758–775 (HGKWRSFSLRKKSFSILS) the composition is skewed to basic residues.

It belongs to the peptidase C19 family. Interacts with creA, creC and qutD.

The enzyme catalyses Thiol-dependent hydrolysis of ester, thioester, amide, peptide and isopeptide bonds formed by the C-terminal Gly of ubiquitin (a 76-residue protein attached to proteins as an intracellular targeting signal).. Its function is as follows. Ubiquitin thioesterase component of the regulatory network controlling carbon source utilization through ubiquitination and deubiquitination involving creA, creB, creC, creD and acrB. Deubiquitinates the creA catabolic repressor and the quinate permease qutD. Also plays a role in response to carbon starvation and the control of extracellular proteases activity. The protein is Probable ubiquitin carboxyl-terminal hydrolase creB (creB) of Aspergillus fumigatus (strain ATCC MYA-4609 / CBS 101355 / FGSC A1100 / Af293) (Neosartorya fumigata).